Consider the following 89-residue polypeptide: Small ribosomal subunit protein uS15 (89 aa).

The protein belongs to the universal ribosomal protein uS15 family. Part of the 30S ribosomal subunit. Forms a bridge to the 50S subunit in the 70S ribosome, contacting the 23S rRNA.

In terms of biological role, one of the primary rRNA binding proteins, it binds directly to 16S rRNA where it helps nucleate assembly of the platform of the 30S subunit by binding and bridging several RNA helices of the 16S rRNA. Functionally, forms an intersubunit bridge (bridge B4) with the 23S rRNA of the 50S subunit in the ribosome. This Phocaeicola vulgatus (strain ATCC 8482 / DSM 1447 / JCM 5826 / CCUG 4940 / NBRC 14291 / NCTC 11154) (Bacteroides vulgatus) protein is Small ribosomal subunit protein uS15.